The primary structure comprises 240 residues: METPRYRRVILKLSGEALAGSQGFGIAHEMLVTVAEQVVEIQKLGVEVALVVGGGNIWRGIAGSKQGMDRANADYMGMLATVMNALALQDAMEKAGAATRVLSAIEMRQVAEPYIRRRAIRHLEKGRVVIFAAGTGNPYFSTDTTAALRAAEIEAEAILMAKRVDGVYDSDPLKNPEAKKYDRLTFLDVLSQGLGVMDSTAASLCMDNNIPLIVFDLNKKGNIRKGIMGESIGTYVGRDK.

12 to 15 contacts ATP; sequence KLSG. The interval 20–25 is involved in allosteric activation by GTP; the sequence is GSQGFG. G54 contributes to the UMP binding site. ATP is bound by residues G55 and R59. UMP contacts are provided by residues D74 and 135–142; that span reads TGNPYFST. ATP-binding residues include Y168 and D171.

Belongs to the UMP kinase family. In terms of assembly, homohexamer.

The protein resides in the cytoplasm. It catalyses the reaction UMP + ATP = UDP + ADP. It participates in pyrimidine metabolism; CTP biosynthesis via de novo pathway; UDP from UMP (UMPK route): step 1/1. With respect to regulation, allosterically activated by GTP. Inhibited by UTP. Its function is as follows. Catalyzes the reversible phosphorylation of UMP to UDP. This is Uridylate kinase from Desulfitobacterium hafniense (strain Y51).